A 112-amino-acid polypeptide reads, in one-letter code: Small ribosomal subunit protein bS16 (112 aa).

The protein belongs to the bacterial ribosomal protein bS16 family.

The protein is Small ribosomal subunit protein bS16 of Aquifex aeolicus (strain VF5).